A 211-amino-acid chain; its full sequence is BAG family molecular chaperone regulator 2 (211 aa).

Ala-2 carries the N-acetylalanine modification. A phosphoserine mark is found at Ser-20, Ser-31, and Ser-73. Residues 20-61 (SMADRSSRLLESLDQLELRVEALREAATAVEQEKEILLEMIH) adopt a coiled-coil conformation. In terms of domain architecture, BAG spans 109–189 (SLKHATRIID…NIENSDKAIK (81 aa)).

As to quaternary structure, binds to the ATPase domain of HSP/HSC70 chaperones. May interact with NWD1. Interacts with HSPA1A (via NBD), HSPA1B (via NBD) and HSPA8. May interact with DNJC9; the interaction seems to be histone-dependent.

In terms of biological role, co-chaperone for HSP70 and HSC70 chaperone proteins. Acts as a nucleotide-exchange factor (NEF) promoting the release of ADP from the HSP70 and HSC70 proteins thereby triggering client/substrate protein release. This is BAG family molecular chaperone regulator 2 (BAG2) from Homo sapiens (Human).